The primary structure comprises 109 residues: PMTKVLKADDINKAISAFKDPGTFDYKRFFHLVGLKGKTDAQVKEVFEILDKDQSGFIEEEELKGVLKGFSAHGRDLNDTETKALLAAGDSDHDGKIGADEFAKMVAQA.

2 EF-hand domains span residues 38 to 73 (KTDA…FSAH) and 77 to 109 (LNDT…VAQA). Residues Asp-51, Asp-53, Ser-55, Glu-62, Asp-90, Asp-92, Asp-94, Lys-96, and Glu-101 each coordinate Ca(2+).

This sequence belongs to the parvalbumin family.

In muscle, parvalbumin is thought to be involved in relaxation after contraction. It binds two calcium ions. In Triakis semifasciata (Leopard shark), this protein is Parvalbumin alpha.